Consider the following 146-residue polypeptide: Inclusion membrane protein D (146 aa).

Transmembrane regions (helical) follow at residues 38 to 58 (AAVA…GLLF) and 68 to 88 (VVAA…ALVG).

It localises to the secreted. The protein resides in the host vacuole. Its subcellular location is the host pathogen-containing vacuole. The protein localises to the host pathogen-containing vacuole membrane. Its function is as follows. Host inclusion membrane protein probably involved in early modification events of the chlamydial inclusion. The sequence is that of Inclusion membrane protein D from Chlamydia trachomatis serovar L2 (strain ATCC VR-902B / DSM 19102 / 434/Bu).